Reading from the N-terminus, the 298-residue chain is Thymidylate synthase (298 aa).

Residues Arg25 and 159–160 (RR) contribute to the dUMP site. Cys179 acts as the Nucleophile in catalysis. DUMP contacts are provided by residues 200 to 203 (RSVD), Asn211, and 241 to 243 (HLY). Position 203 (Asp203) interacts with (6R)-5,10-methylene-5,6,7,8-tetrahydrofolate. Ala297 is a binding site for (6R)-5,10-methylene-5,6,7,8-tetrahydrofolate.

This sequence belongs to the thymidylate synthase family. Bacterial-type ThyA subfamily. In terms of assembly, homodimer.

It localises to the cytoplasm. It catalyses the reaction dUMP + (6R)-5,10-methylene-5,6,7,8-tetrahydrofolate = 7,8-dihydrofolate + dTMP. The protein operates within pyrimidine metabolism; dTTP biosynthesis. Functionally, catalyzes the reductive methylation of 2'-deoxyuridine-5'-monophosphate (dUMP) to 2'-deoxythymidine-5'-monophosphate (dTMP) while utilizing 5,10-methylenetetrahydrofolate (mTHF) as the methyl donor and reductant in the reaction, yielding dihydrofolate (DHF) as a by-product. This enzymatic reaction provides an intracellular de novo source of dTMP, an essential precursor for DNA biosynthesis. The sequence is that of Thymidylate synthase from Cereibacter sphaeroides (strain ATCC 17025 / ATH 2.4.3) (Rhodobacter sphaeroides).